The chain runs to 305 residues: Dihydroorotate dehydrogenase B (NAD(+)), catalytic subunit (305 aa).

Residues Ser-21 and 45 to 46 (KG) contribute to the FMN site. Residues Lys-45 and 69 to 73 (NAVGL) each bind substrate. FMN-binding residues include Asn-99 and Asn-127. Asn-127 is a substrate binding site. Residue Cys-130 is the Nucleophile of the active site. 2 residues coordinate FMN: Lys-165 and Ile-191. 192–193 (NT) is a substrate binding site. Residues Gly-217, 243 to 244 (GG), and 265 to 266 (GT) contribute to the FMN site.

Belongs to the dihydroorotate dehydrogenase family. Type 1 subfamily. In terms of assembly, heterotetramer of 2 PyrK and 2 PyrD type B subunits. FMN is required as a cofactor.

The protein localises to the cytoplasm. The catalysed reaction is (S)-dihydroorotate + NAD(+) = orotate + NADH + H(+). Its pathway is pyrimidine metabolism; UMP biosynthesis via de novo pathway; orotate from (S)-dihydroorotate (NAD(+) route): step 1/1. Its function is as follows. Catalyzes the conversion of dihydroorotate to orotate with NAD(+) as electron acceptor. This Parabacteroides distasonis (strain ATCC 8503 / DSM 20701 / CIP 104284 / JCM 5825 / NCTC 11152) protein is Dihydroorotate dehydrogenase B (NAD(+)), catalytic subunit (pyrD).